A 210-amino-acid polypeptide reads, in one-letter code: ESCRT-III complex subunit did4 (210 aa).

Residues 1–38 (MGLTSWLFGGGKSPQEQLRAHQRSLGRAERELDRERTK) form a disordered region. Residues 15 to 97 (QEQLRAHQRS…AISLRLQTMR (83 aa)) adopt a coiled-coil conformation. Positions 26-38 (GRAERELDRERTK) are enriched in basic and acidic residues.

It belongs to the SNF7 family. As to quaternary structure, core component of the ESCRT-III complex (endosomal sorting required for transport complex III). ESCRT-III appears to be sequentially assembled as a flat lattice on the endosome membrane.

The protein resides in the cytoplasm. The protein localises to the endosome membrane. Required for the sorting and concentration of proteins resulting in the entry of these proteins into the invaginating vesicles of the multivesicular body (MVB). Acts a component of the ESCRT-III complex, which appears to be critical for late steps in MVB sorting, such as membrane invagination and final cargo sorting and recruitment of late-acting components of the sorting machinery. The MVB pathway requires the sequential function of ESCRT-O, -I,-II and -III complex assemblies. In Schizosaccharomyces pombe (strain 972 / ATCC 24843) (Fission yeast), this protein is ESCRT-III complex subunit did4 (did4).